Reading from the N-terminus, the 274-residue chain is Type II restriction enzyme XamI (274 aa).

It catalyses the reaction Endonucleolytic cleavage of DNA to give specific double-stranded fragments with terminal 5'-phosphates.. Functionally, a P subtype restriction enzyme that recognizes the double-stranded sequence 5'-GTCGAC-3' and cleaves after G-1. In Xanthomonas campestris pv. amaranthicola, this protein is Type II restriction enzyme XamI (xamIR).